The sequence spans 97 residues: Cysteine-rich and transmembrane domain-containing protein 1 (97 aa).

Residues 1–40 (MNQENPPPYPGPGPTAPYPPYPPQPMGPGPMGGPYPPPQG) are compositionally biased toward pro residues. Residues 1-61 (MNQENPPPYP…QGGPQEPPKT (61 aa)) form a disordered region. Over residues 41 to 50 (YPYQGYPQYG) the composition is skewed to low complexity. The chain crosses the membrane as a helical span at residues 74 to 91 (LGPSTCLTACWTALCCCC).

It belongs to the CYSTM1 family.

It is found in the membrane. The protein is Cysteine-rich and transmembrane domain-containing protein 1 (CYSTM1) of Homo sapiens (Human).